We begin with the raw amino-acid sequence, 308 residues long: 1D-myo-inositol 2-acetamido-2-deoxy-alpha-D-glucopyranoside deacetylase (308 aa).

Residues H18, D21, and H153 each coordinate Zn(2+).

Belongs to the MshB deacetylase family. Zn(2+) serves as cofactor.

It catalyses the reaction 1D-myo-inositol 2-acetamido-2-deoxy-alpha-D-glucopyranoside + H2O = 1D-myo-inositol 2-amino-2-deoxy-alpha-D-glucopyranoside + acetate. In terms of biological role, catalyzes the deacetylation of 1D-myo-inositol 2-acetamido-2-deoxy-alpha-D-glucopyranoside (GlcNAc-Ins) in the mycothiol biosynthesis pathway. The polypeptide is 1D-myo-inositol 2-acetamido-2-deoxy-alpha-D-glucopyranoside deacetylase (Salinispora arenicola (strain CNS-205)).